Reading from the N-terminus, the 496-residue chain is Germacrene A hydroxylase (496 aa).

Over 1–2 (ME) the chain is Cytoplasmic. Residues 3–23 (LTLTTSLGLAVFVFILFKLLT) traverse the membrane as a helical; Signal-anchor for type II membrane protein segment. The Lumenal segment spans residues 24-496 (GSKSTKNSLP…TAYKTANNSA (473 aa)). Cys-432 serves as a coordination point for heme. Asn-493 carries an N-linked (GlcNAc...) asparagine glycan.

It belongs to the cytochrome P450 family. Heme is required as a cofactor.

It is found in the endoplasmic reticulum membrane. It catalyses the reaction (+)-(R)-germacrene A + 3 reduced [NADPH--hemoprotein reductase] + 3 O2 = germacra-1(10),4,11(13)-trien-12-oate + 3 oxidized [NADPH--hemoprotein reductase] + 4 H2O + 4 H(+). It functions in the pathway secondary metabolite biosynthesis; terpenoid biosynthesis. Functionally, involved in the biosynthesis of germacrene-derived sesquiterpene lactones. Catalyzes three consecutive oxidations of germacrene A to produce germacrene A acid. Could also catalyze the three-step oxidation of non-natural substrate amorphadiene to artemisinic acid. The chain is Germacrene A hydroxylase from Barnadesia spinosa (Spiny barnadesia).